The primary structure comprises 116 residues: Ribonuclease P protein component (116 aa).

The protein belongs to the RnpA family. In terms of assembly, consists of a catalytic RNA component (M1 or rnpB) and a protein subunit.

It catalyses the reaction Endonucleolytic cleavage of RNA, removing 5'-extranucleotides from tRNA precursor.. RNaseP catalyzes the removal of the 5'-leader sequence from pre-tRNA to produce the mature 5'-terminus. It can also cleave other RNA substrates such as 4.5S RNA. The protein component plays an auxiliary but essential role in vivo by binding to the 5'-leader sequence and broadening the substrate specificity of the ribozyme. The chain is Ribonuclease P protein component from Mycobacterium bovis (strain ATCC BAA-935 / AF2122/97).